We begin with the raw amino-acid sequence, 116 residues long: Peptidyl-tRNA hydrolase (116 aa).

Belongs to the PTH2 family.

It localises to the cytoplasm. The enzyme catalyses an N-acyl-L-alpha-aminoacyl-tRNA + H2O = an N-acyl-L-amino acid + a tRNA + H(+). Its function is as follows. The natural substrate for this enzyme may be peptidyl-tRNAs which drop off the ribosome during protein synthesis. This Methanococcus maripaludis (strain C6 / ATCC BAA-1332) protein is Peptidyl-tRNA hydrolase.